The chain runs to 344 residues: UDP-3-O-acylglucosamine N-acyltransferase (344 aa).

The active-site Proton acceptor is the H248.

This sequence belongs to the transferase hexapeptide repeat family. LpxD subfamily. Homotrimer.

It carries out the reaction a UDP-3-O-[(3R)-3-hydroxyacyl]-alpha-D-glucosamine + a (3R)-hydroxyacyl-[ACP] = a UDP-2-N,3-O-bis[(3R)-3-hydroxyacyl]-alpha-D-glucosamine + holo-[ACP] + H(+). It participates in bacterial outer membrane biogenesis; LPS lipid A biosynthesis. Functionally, catalyzes the N-acylation of UDP-3-O-acylglucosamine using 3-hydroxyacyl-ACP as the acyl donor. Is involved in the biosynthesis of lipid A, a phosphorylated glycolipid that anchors the lipopolysaccharide to the outer membrane of the cell. This is UDP-3-O-acylglucosamine N-acyltransferase from Prochlorococcus marinus subsp. pastoris (strain CCMP1986 / NIES-2087 / MED4).